The chain runs to 511 residues: Apolipoprotein N-acyltransferase (511 aa).

A run of 6 helical transmembrane segments spans residues 7–25 (PGWP…TPLA), 58–78 (GWWY…VSIH), 90–110 (FLML…AWLW), 125–145 (LAFA…LTGF), 163–183 (VPVG…ALLV), and 192–212 (GASL…GLYL). One can recognise a CN hydrolase domain in the interval 230–470 (IQGNIAQELK…QGILRGEVIP (241 aa)). The active-site Proton acceptor is the Glu-269. Lys-330 is a catalytic residue. The active-site Nucleophile is the Cys-382. The chain crosses the membrane as a helical span at residues 478-498 (LQYRVWPLAGLAGVLLLWALL).

Belongs to the CN hydrolase family. Apolipoprotein N-acyltransferase subfamily.

It localises to the cell inner membrane. It catalyses the reaction N-terminal S-1,2-diacyl-sn-glyceryl-L-cysteinyl-[lipoprotein] + a glycerophospholipid = N-acyl-S-1,2-diacyl-sn-glyceryl-L-cysteinyl-[lipoprotein] + a 2-acyl-sn-glycero-3-phospholipid + H(+). The protein operates within protein modification; lipoprotein biosynthesis (N-acyl transfer). In terms of biological role, catalyzes the phospholipid dependent N-acylation of the N-terminal cysteine of apolipoprotein, the last step in lipoprotein maturation. The chain is Apolipoprotein N-acyltransferase from Pseudomonas paraeruginosa (strain DSM 24068 / PA7) (Pseudomonas aeruginosa (strain PA7)).